A 93-amino-acid polypeptide reads, in one-letter code: Pyrimidine/purine nucleoside phosphorylase (93 aa).

This sequence belongs to the nucleoside phosphorylase PpnP family.

It catalyses the reaction a purine D-ribonucleoside + phosphate = a purine nucleobase + alpha-D-ribose 1-phosphate. It carries out the reaction adenosine + phosphate = alpha-D-ribose 1-phosphate + adenine. The enzyme catalyses cytidine + phosphate = cytosine + alpha-D-ribose 1-phosphate. The catalysed reaction is guanosine + phosphate = alpha-D-ribose 1-phosphate + guanine. It catalyses the reaction inosine + phosphate = alpha-D-ribose 1-phosphate + hypoxanthine. It carries out the reaction thymidine + phosphate = 2-deoxy-alpha-D-ribose 1-phosphate + thymine. The enzyme catalyses uridine + phosphate = alpha-D-ribose 1-phosphate + uracil. The catalysed reaction is xanthosine + phosphate = alpha-D-ribose 1-phosphate + xanthine. In terms of biological role, catalyzes the phosphorolysis of diverse nucleosides, yielding D-ribose 1-phosphate and the respective free bases. Can use uridine, adenosine, guanosine, cytidine, thymidine, inosine and xanthosine as substrates. Also catalyzes the reverse reactions. This Vibrio vulnificus (strain CMCP6) protein is Pyrimidine/purine nucleoside phosphorylase.